The sequence spans 1256 residues: N-acetylglucosamine-1-phosphotransferase subunits alpha/beta (1256 aa).

Residues 22–42 (VCFLGVVVTIVSAFQFGEVVL) form a helical membrane-spanning segment. Residues N83, N114, N148, N179, and N250 are each glycosylated (N-linked (GlcNAc...) asparagine). Disulfide bonds link C438-C461, C452-C468, C505-C528, and C519-C535. LNR repeat units lie at residues 438-473 (CAEG…GNSG) and 505-545 (CNQG…ELYK). Ca(2+)-binding residues include D449, D464, D467, D516, D531, and D534. 5 N-linked (GlcNAc...) asparagine glycosylation sites follow: N614, N699, N729, N829, and N1009. The DMAP1-binding domain occupies 699 to 798 (NISLLPKDAQ…TFPAVSVKVN (100 aa)). Positions 1005–1040 (VQPLNISQVFDEVDTDQSGVLSDREIRTLATRIHEL) constitute an EF-hand domain. Residues D1018, D1020, S1022, and E1029 each contribute to the Ca(2+) site. Residue N1129 is glycosylated (N-linked (GlcNAc...) asparagine). Residues 1215-1235 (VLATLIMFTIFSFFAEQLIAL) form a helical membrane-spanning segment.

The protein belongs to the stealth family. As to quaternary structure, hexamer of two alpha, two beta and two gamma (GNPTG) subunits; disulfide-linked. The alpha and/or the beta subunits of the enzyme constitute the catalytic subunits. Interacts with LYSET; facilitates proper localization of GNPTAB. Post-translationally, the alpha- and beta-subunits are generated by a proteolytic cleavage by MBTPS1 protease at the Lys-928-Asp-929 bond. As to expression, expressed in the heart, whole brain, placenta, lung, liver, skeletal muscle, kidney and pancreas.

It is found in the golgi apparatus membrane. It carries out the reaction N(4)-[alpha-D-mannosyl-(1-&gt;2)-alpha-D-mannosyl-(glycan)]-L-asparaginyl-[protein] + UDP-N-acetyl-alpha-D-glucosamine = N(4)-[6-(N-acetyl-alpha-D-glucosaminyl-1-phospho)-alpha-D-mannosyl-(1-&gt;2)-alpha-D-mannosyl-(glycan)]-L-asparaginyl-[protein] + UMP + H(+). Its function is as follows. Catalyzes the formation of mannose 6-phosphate (M6P) markers on high mannose type oligosaccharides in the Golgi apparatus. M6P residues are required to bind to the M6P receptors (MPR), which mediate the vesicular transport of lysosomal enzymes to the endosomal/prelysosomal compartment. This Homo sapiens (Human) protein is N-acetylglucosamine-1-phosphotransferase subunits alpha/beta (GNPTAB).